A 285-amino-acid chain; its full sequence is NADPH-dependent 7-cyano-7-deazaguanine reductase (285 aa).

91–93 (IES) serves as a coordination point for substrate. 93–94 (SK) is a binding site for NADPH. The Thioimide intermediate role is filled by Cys191. The active-site Proton donor is the Asp198. 230–231 (HE) is a binding site for substrate. 259–260 (RG) provides a ligand contact to NADPH.

This sequence belongs to the GTP cyclohydrolase I family. QueF type 2 subfamily. In terms of assembly, homodimer.

Its subcellular location is the cytoplasm. It carries out the reaction 7-aminomethyl-7-carbaguanine + 2 NADP(+) = 7-cyano-7-deazaguanine + 2 NADPH + 3 H(+). It functions in the pathway tRNA modification; tRNA-queuosine biosynthesis. Catalyzes the NADPH-dependent reduction of 7-cyano-7-deazaguanine (preQ0) to 7-aminomethyl-7-deazaguanine (preQ1). The sequence is that of NADPH-dependent 7-cyano-7-deazaguanine reductase from Legionella pneumophila (strain Lens).